Reading from the N-terminus, the 347-residue chain is Endothelin receptor type B (347 aa).

The Extracellular segment spans residues 1 to 7 (EIKETFK). The helical transmembrane segment at 8–32 (YINTVVSCLVFVLGIIGNSTLLRII) threads the bilayer. The Cytoplasmic segment spans residues 33 to 43 (YKNKCMRNGPN). A helical membrane pass occupies residues 44 to 69 (ILIASLALGDLLHIIIDIPISVYKLL). Residues 70-81 (AEDWPFGVEMCK) are Extracellular-facing. Cysteines 80 and 161 form a disulfide. Residues 82–103 (LVPFIQKASVGITVLSLCALSI) form a helical membrane-spanning segment. At 104–124 (DRYRAVASWSRIKGIGVPKWT) the chain is on the cytoplasmic side. The chain crosses the membrane as a helical span at residues 125–149 (AVEIVLIWVISVVLAVPEAIAFDMI). At 150 to 177 (TMEYRGKDLRICLLHPTQKTSFMMFYKQ) the chain is on the extracellular side. Residues 178 to 202 (AKDWWLFSFYFCLPLAITALFYTLM) form a helical membrane-spanning segment. Residues 203–230 (TCEMLRKKSGMQIALNDHLKQRREVAKT) are Cytoplasmic-facing. The chain crosses the membrane as a helical span at residues 231-256 (VFCLVLVFALCWLPLHLSRILKLTIY). The Extracellular portion of the chain corresponds to 257 to 268 (DQKDPNRCELLS). Residues 269 to 295 (FFLVMDYIGINMASLNSCINPIALYLV) form a helical membrane-spanning segment. The Cytoplasmic portion of the chain corresponds to 296 to 347 (SKRFQNCFKSCLCCWCQSKDLLSLEERQSCLKFKANDHGYDNFRSSNKYSSS). S-palmitoyl cysteine attachment occurs at residues Cys309 and Cys311.

Belongs to the G-protein coupled receptor 1 family. Endothelin receptor subfamily. EDNRB sub-subfamily.

It localises to the cell membrane. Functionally, non-specific receptor for endothelin 1, 2, and 3. Mediates its action by association with G proteins that activate a phosphatidylinositol-calcium second messenger system. This is Endothelin receptor type B (EDNRB) from Coturnix japonica (Japanese quail).